We begin with the raw amino-acid sequence, 173 residues long: MKKQIDKDYHLHIFHAKQCDPKKCTGKKMARFELARIFDKVQKIPRGSILLDPMAKQALSPADKHEQNITVLDCSWETVEEVFPHLMRLHLQHRALPYLVATNPVNFGRPFKLTSVEAFAAALYILGNKKQAEKILSKFNWGHVFLDMNKEPLEDYSKAKDSNEIIKIQSEYM.

S-adenosyl-L-methionine-binding residues include Thr25, Leu72, Leu96, and Ser115.

Belongs to the TDD superfamily. TSR3 family.

The protein resides in the cytoplasm. It carries out the reaction an N(1)-methylpseudouridine in rRNA + S-adenosyl-L-methionine = N(1)-methyl-N(3)-[(3S)-3-amino-3-carboxypropyl]pseudouridine in rRNA + S-methyl-5'-thioadenosine + H(+). Functionally, aminocarboxypropyltransferase that catalyzes the aminocarboxypropyl transfer on pseudouridine corresponding to position 914 in M.jannaschii 16S rRNA. It constitutes the last step in biosynthesis of the hypermodified N1-methyl-N3-(3-amino-3-carboxypropyl) pseudouridine (m1acp3-Psi). The chain is 16S rRNA aminocarboxypropyltransferase from Methanococcoides burtonii (strain DSM 6242 / NBRC 107633 / OCM 468 / ACE-M).